The chain runs to 141 residues: MKDEQMLTEWPSHLPWLNQSQNDFTFPSDTYLLLYFWSMSCPNCHQLTDKVLQDIKDMNVKVIGVHVPYIEEEKSMEVVLTYALDRGLAIPIVLDQNYEIVTTCHVQGIPSFCLLSQYGQIITKTMGDVGWDKMLKKIAGL.

In terms of domain architecture, Thioredoxin spans 2–141 (KDEQMLTEWP…DKMLKKIAGL (140 aa)). Cysteines 41 and 44 form a disulfide.

In terms of biological role, required for production of the bacteriocin SkfA. This Bacillus subtilis (strain 168) protein is Thioredoxin-like protein SkfH.